The primary structure comprises 113 residues: Probable mesentericin-Y105 immunity protein (113 aa).

The protein belongs to the immunity protein EntA family.

In terms of biological role, imparts immunity to mesentericin-Y105 to naturally sensitive host strains. The sequence is that of Probable mesentericin-Y105 immunity protein (mesI) from Leuconostoc mesenteroides.